The following is a 579-amino-acid chain: XK-related protein 7 (579 aa).

A compositionally biased stretch (low complexity) spans 1 to 18; it reads MAAKSDGAAASASPDPEG. The disordered stretch occupies residues 1-40; it reads MAAKSDGAAASASPDPEGAAGGARGSAGGRGEAAAAAGPP. The segment covering 19 to 31 has biased composition (gly residues); the sequence is AAGGARGSAGGRG. 2 consecutive transmembrane segments (helical) span residues 59–79 and 89–109; these read WVLC…WLAA and YFSL…LLSF. A disordered region spans residues 146–165; sequence GAFRTKEGSPEPGPQPAPSS. A run of 5 helical transmembrane segments spans residues 260–280, 314–334, 355–375, 384–404, and 415–435; these read LLPA…LASY, GLAF…FIVA, WEEI…WFNV, MTLY…FWYS, and LIMV…MCVY. The segment at 466 to 510 is disordered; sequence ADAITSPPRSLPRTTGAERDGASAGERAGTPTPPVFQVRPGLPPT.

This sequence belongs to the XK family.

The protein localises to the cell membrane. This is XK-related protein 7 from Homo sapiens (Human).